Here is a 154-residue protein sequence, read N- to C-terminus: Endoribonuclease YbeY (154 aa).

Positions 113, 117, and 123 each coordinate Zn(2+).

Belongs to the endoribonuclease YbeY family. Zn(2+) serves as cofactor.

Its subcellular location is the cytoplasm. Functionally, single strand-specific metallo-endoribonuclease involved in late-stage 70S ribosome quality control and in maturation of the 3' terminus of the 16S rRNA. This chain is Endoribonuclease YbeY, found in Aeromonas salmonicida (strain A449).